The following is a 295-amino-acid chain: MHYRIGTRGSKLALVQSEYVKRRMEEAYPEDTFELVIIKTTGDKVTDKPLAAIGTKGFFVKEIEEALLSGSIDMAVHSMKDMPAECAAGLTFAKAWKREDCRDVLILKTAGSFSELPSGAVIGTGSLRRACQLAMLRPDIQFTAIRGNVDTRINKLMDDSYGLDGIVLAAAGLNRLGRSSEITEYLDPEVVIPAPAQGVLAIETAEVNTELLDKINALSDDNSDREAVAERTFLRLTGGGCHAPVGAHCVTKDNGDLRMVVLFGNDDCSRILRIEVTGTDSEAVGHEAARMLGLE.

Cys241 bears the S-(dipyrrolylmethanemethyl)cysteine mark.

The protein belongs to the HMBS family. Monomer. It depends on dipyrromethane as a cofactor.

The catalysed reaction is 4 porphobilinogen + H2O = hydroxymethylbilane + 4 NH4(+). Its pathway is porphyrin-containing compound metabolism; protoporphyrin-IX biosynthesis; coproporphyrinogen-III from 5-aminolevulinate: step 2/4. Functionally, tetrapolymerization of the monopyrrole PBG into the hydroxymethylbilane pre-uroporphyrinogen in several discrete steps. In Lachnospira eligens (strain ATCC 27750 / DSM 3376 / VPI C15-48 / C15-B4) (Eubacterium eligens), this protein is Porphobilinogen deaminase.